The chain runs to 273 residues: Large ribosomal subunit protein uL2c (273 aa).

Belongs to the universal ribosomal protein uL2 family. Part of the 50S ribosomal subunit.

It localises to the plastid. Its subcellular location is the apicoplast. The polypeptide is Large ribosomal subunit protein uL2c (rpl2) (Eimeria tenella (Coccidian parasite)).